Here is a 354-residue protein sequence, read N- to C-terminus: 3-dehydroquinate synthase (354 aa).

NAD(+) is bound by residues 66–71 (SGETSK), 100–104 (GATGD), 124–125 (TT), Lys-136, Lys-145, and 163–166 (FLET). Zn(2+) is bound by residues Glu-178, His-242, and His-256.

The protein belongs to the sugar phosphate cyclases superfamily. Dehydroquinate synthase family. Requires NAD(+) as cofactor. It depends on Co(2+) as a cofactor. The cofactor is Zn(2+).

It is found in the cytoplasm. It catalyses the reaction 7-phospho-2-dehydro-3-deoxy-D-arabino-heptonate = 3-dehydroquinate + phosphate. It functions in the pathway metabolic intermediate biosynthesis; chorismate biosynthesis; chorismate from D-erythrose 4-phosphate and phosphoenolpyruvate: step 2/7. In terms of biological role, catalyzes the conversion of 3-deoxy-D-arabino-heptulosonate 7-phosphate (DAHP) to dehydroquinate (DHQ). In Staphylococcus epidermidis (strain ATCC 35984 / DSM 28319 / BCRC 17069 / CCUG 31568 / BM 3577 / RP62A), this protein is 3-dehydroquinate synthase.